The primary structure comprises 30 residues: Non-toxic phospholipase A2 (30 aa).

Ca(2+)-binding residues include tyrosine 26, glycine 28, and glycine 30.

The protein belongs to the phospholipase A2 family. Group I subfamily. Homodimer. Requires Ca(2+) as cofactor. Post-translationally, glycosylated. As to expression, expressed by the venom gland.

The protein localises to the secreted. The enzyme catalyses a 1,2-diacyl-sn-glycero-3-phosphocholine + H2O = a 1-acyl-sn-glycero-3-phosphocholine + a fatty acid + H(+). Enzymatic activity is diminished by Cd(2+) and Hg(2+). Functionally, relatively highly potent phospholipase A2 that displays potent antimicrobial and hemolytic activities. It does not show cytotoxic effects on the three human cell lines tested. PLA2 catalyzes the calcium-dependent hydrolysis of the 2-acyl groups in 3-sn-phosphoglycerides. It shows similar potencies on both Gram-negative and Gram-positive bacteria: B.cereus (MIC&gt;9 ug/ml), B.subtilis (MIC&gt;12 ug/ml), E.faecalis (MIC&gt;7 ug/ml), S.epidermidis (MIC&gt;12 ug/ml), S.aureux (MIC&gt;5 ug/ml), E.coli (MIC&gt;7 ug/ml), K.pneumonia (MIC&gt;8 ug/ml), P.aeruginosa (MIC&gt;10 ug/ml), and S.enteric (MIC&gt;9 ug/ml). It also shows antifungal activities: A.niger (MIC&gt;15 ug/ml), B.cinerea (MIC&gt;12 ug/ml), F.solani (MIC&gt;15 ug/ml), and P.digitatum (MIC&gt;10 ug/ml). This Walterinnesia aegyptia (Desert black snake) protein is Non-toxic phospholipase A2.